Consider the following 635-residue polypeptide: Interferon-induced GTP-binding protein Mx2 (635 aa).

One can recognise a Dynamin-type G domain in the interval 31–304 (DLALPAIAVI…LVQHIEKSMP (274 aa)). Positions 41-48 (GDQSSGKS) are G1 motif. GTP is bound at residue 41-48 (GDQSSGKS). Residues 66–68 (VTR) form a G2 motif region. The G3 motif stretch occupies residues 142 to 145 (DLPG). GTP-binding positions include 142–146 (DLPGI) and 211–214 (TKPD). The G4 motif stretch occupies residues 211–214 (TKPD). The tract at residues 243 to 246 (KCRG) is G5 motif. Residues 549-635 (LREMMLHLKS…MKAHNYLVEF (87 aa)) form the GED domain.

The protein belongs to the TRAFAC class dynamin-like GTPase superfamily. Dynamin/Fzo/YdjA family.

The protein resides in the nucleus. It is found in the cytoplasm. Does not inhibit strain RB-1 of the fish pathogen, infectious hematopoietic necrosis virus (IHNV). This is Interferon-induced GTP-binding protein Mx2 from Oncorhynchus mykiss (Rainbow trout).